The primary structure comprises 198 residues: Na(+)-translocating NADH-quinone reductase subunit E (198 aa).

6 helical membrane passes run 11 to 31 (SVFIENMALSFFLGMCTFLAV), 35 to 55 (VSTAFGLGIAVIVVLGIAVPA), 77 to 97 (FLNFITFIGVIAALVQILEMI), 110 to 130 (GIFLPLITVNCAIFGGVSFMV), 140 to 160 (VVYGLGAGTGWMLAIVALAGL), and 176 to 196 (LGITFITVGLMALGFMSFSGI).

This sequence belongs to the NqrDE/RnfAE family. Composed of six subunits; NqrA, NqrB, NqrC, NqrD, NqrE and NqrF.

The protein localises to the cell inner membrane. The catalysed reaction is a ubiquinone + n Na(+)(in) + NADH + H(+) = a ubiquinol + n Na(+)(out) + NAD(+). NQR complex catalyzes the reduction of ubiquinone-1 to ubiquinol by two successive reactions, coupled with the transport of Na(+) ions from the cytoplasm to the periplasm. NqrA to NqrE are probably involved in the second step, the conversion of ubisemiquinone to ubiquinol. The polypeptide is Na(+)-translocating NADH-quinone reductase subunit E (Actinobacillus pleuropneumoniae serotype 5b (strain L20)).